Consider the following 352-residue polypeptide: N-acetyl-gamma-glutamyl-phosphate reductase (352 aa).

Cysteine 155 is an active-site residue.

Belongs to the NAGSA dehydrogenase family. Type 1 subfamily.

It localises to the cytoplasm. The enzyme catalyses N-acetyl-L-glutamate 5-semialdehyde + phosphate + NADP(+) = N-acetyl-L-glutamyl 5-phosphate + NADPH + H(+). Its pathway is amino-acid biosynthesis; L-arginine biosynthesis; N(2)-acetyl-L-ornithine from L-glutamate: step 3/4. Catalyzes the NADPH-dependent reduction of N-acetyl-5-glutamyl phosphate to yield N-acetyl-L-glutamate 5-semialdehyde. In Gloeothece citriformis (strain PCC 7424) (Cyanothece sp. (strain PCC 7424)), this protein is N-acetyl-gamma-glutamyl-phosphate reductase.